We begin with the raw amino-acid sequence, 320 residues long: Minor outer capsid protein P9 (320 aa).

A disordered region spans residues 297 to 320; it reads RNDDEEELAGSEFTSLLSDDGRMG.

It belongs to the phytoreovirus minor outer capsid protein P9 family.

The protein resides in the virion. It localises to the host cytoplasm. In terms of biological role, minor outer capsid protein. In Rice gall dwarf virus (RGDV), this protein is Minor outer capsid protein P9.